The chain runs to 123 residues: Large ribosomal subunit protein bL12 (123 aa).

It belongs to the bacterial ribosomal protein bL12 family. In terms of assembly, homodimer. Part of the ribosomal stalk of the 50S ribosomal subunit. Forms a multimeric L10(L12)X complex, where L10 forms an elongated spine to which 2 to 4 L12 dimers bind in a sequential fashion. Binds GTP-bound translation factors.

Functionally, forms part of the ribosomal stalk which helps the ribosome interact with GTP-bound translation factors. Is thus essential for accurate translation. This chain is Large ribosomal subunit protein bL12, found in Aliarcobacter butzleri (strain RM4018) (Arcobacter butzleri).